Reading from the N-terminus, the 193-residue chain is MAASDITVSGLNKVGAEDAAYLVSKIRTIPGFPKEGILFRDFMPVLADARAFGILMGALEAALPVDVDDFDMVVGLEARGFLFGPALAARLGKGFIAVRKAGKLPPETMSQSYDLEYGQASMEIETNVVHEGVRVLIVDDLIATGGTANAARSLIEKCGGVVAGFSFVMELTGIDGMKSLGDYPTSSLVCMPA.

The protein belongs to the purine/pyrimidine phosphoribosyltransferase family. Homodimer.

The protein localises to the cytoplasm. It carries out the reaction AMP + diphosphate = 5-phospho-alpha-D-ribose 1-diphosphate + adenine. It participates in purine metabolism; AMP biosynthesis via salvage pathway; AMP from adenine: step 1/1. Catalyzes a salvage reaction resulting in the formation of AMP, that is energically less costly than de novo synthesis. The chain is Adenine phosphoribosyltransferase from Bifidobacterium adolescentis (strain ATCC 15703 / DSM 20083 / NCTC 11814 / E194a).